Consider the following 320-residue polypeptide: Mas-related G-protein coupled receptor member D (320 aa).

Over 1 to 33 (MNQTLNSSGTAELALNHSRGSVVHAACLVLSSL) the chain is Extracellular. 3 N-linked (GlcNAc...) asparagine glycosylation sites follow: Asn2, Asn6, and Asn16. The helical transmembrane segment at 34-54 (AMFTCLCGMAGNSMVIWLLGF) threads the bilayer. The Cytoplasmic portion of the chain corresponds to 55-62 (RMRRTPFS). Residues 63 to 83 (IYILNLAAADLLFVFCMAAML) form a helical membrane-spanning segment. Topologically, residues 84 to 112 (SLETQPLVSTTDKVHELMKRLKYFAYTVG) are extracellular. Residues 113 to 133 (LSLLTAISTQRCLSVLFPIWF) form a helical membrane-spanning segment. Residues 134–142 (KCHRPRHLS) are Cytoplasmic-facing. Residues 143 to 163 (AWVCALLWMLCLLTNGLTSCF) traverse the membrane as a helical segment. Residues 164-182 (CSKFLKFNKDQCFRVDMVQ) lie on the Extracellular side of the membrane. A helical membrane pass occupies residues 183–203 (AALIMGVLTPVMTLSSLTLFV). Topologically, residues 204–218 (RVRRSSQQWRRQPTR) are cytoplasmic. The helical transmembrane segment at 219 to 239 (LFVVVLASVLVFLICSLPLGF) threads the bilayer. Residues 240–257 (YWFVLYWLNLPPDTKVLY) lie on the Extracellular side of the membrane. A helical membrane pass occupies residues 258 to 280 (FNLSRLSSSMSSSANPLIYFLVG). Topologically, residues 281 to 320 (SRRSRRLQGSLGTVLQRALREEPELEGGETPTTGTNEMGA) are cytoplasmic. The disordered stretch occupies residues 301–320 (EEPELEGGETPTTGTNEMGA). Positions 308 to 320 (GETPTTGTNEMGA) are enriched in low complexity.

Belongs to the G-protein coupled receptor 1 family. Mas subfamily. In terms of tissue distribution, co-expressed in the small diameter neurons with P2X3 and VR1 in dorsal root ganglia.

Its subcellular location is the cell membrane. May regulate nociceptor function and/or development, including the sensation or modulation of pain. Functions as a specific membrane receptor for beta-alanine. The receptor couples with G-protein G(q) and G(i). The sequence is that of Mas-related G-protein coupled receptor member D (MRGPRD) from Macaca fascicularis (Crab-eating macaque).